The primary structure comprises 610 residues: Peptidyl-prolyl cis-trans isomerase 9 (610 aa).

A Phosphoserine modification is found at S13. WD repeat units follow at residues 45 to 83 (MHNAEIYKCFPTKSNYILSVSYDGYVKFWHKTPNGVEYI), 88 to 127 (AHNAMLLSAELSQDERLFITGADDKSLKVFDVESIDLVNI), and 177 to 216 (KHTAPVHCLRYLSTLDCFLSIDIGGMVEYWSPEEPFQKPD). In terms of domain architecture, PPIase cyclophilin-type spans 453–607 (LGKAAIIHTT…EPTKIINISI (155 aa)).

The protein belongs to the cyclophilin-type PPIase family.

It localises to the nucleus. It carries out the reaction [protein]-peptidylproline (omega=180) = [protein]-peptidylproline (omega=0). In terms of biological role, PPIases accelerate the folding of proteins. It catalyzes the cis-trans isomerization of proline imidic peptide bonds in oligopeptides. In Schizosaccharomyces pombe (strain 972 / ATCC 24843) (Fission yeast), this protein is Peptidyl-prolyl cis-trans isomerase 9 (cyp9).